Consider the following 360-residue polypeptide: Glycerol-1-phosphate dehydrogenase [NAD(P)+] (360 aa).

NAD(+) contacts are provided by residues 108 to 112 and 130 to 133; these read GRVID and TAAS. Asp-135 is a substrate binding site. Residue Ser-139 coordinates NAD(+). Residue Asp-182 coordinates substrate. The Zn(2+) site is built by Asp-182 and His-262. Position 266 (His-266) interacts with substrate. Zn(2+) is bound at residue His-278.

It belongs to the glycerol-1-phosphate dehydrogenase family. Requires Zn(2+) as cofactor.

The protein localises to the cytoplasm. The enzyme catalyses sn-glycerol 1-phosphate + NAD(+) = dihydroxyacetone phosphate + NADH + H(+). It catalyses the reaction sn-glycerol 1-phosphate + NADP(+) = dihydroxyacetone phosphate + NADPH + H(+). It participates in membrane lipid metabolism; glycerophospholipid metabolism. In terms of biological role, catalyzes the NAD(P)H-dependent reduction of dihydroxyacetonephosphate (DHAP or glycerone phosphate) to glycerol 1-phosphate (G1P). The G1P thus generated is used as the glycerophosphate backbone of phospholipids in the cellular membranes of Archaea. This is Glycerol-1-phosphate dehydrogenase [NAD(P)+] from Methanoculleus marisnigri (strain ATCC 35101 / DSM 1498 / JR1).